A 360-amino-acid chain; its full sequence is Phospho-N-acetylmuramoyl-pentapeptide-transferase (360 aa).

The next 10 membrane-spanning stretches (helical) occupy residues 26-46 (AILGVMTALGLSLLLGPWVIN), 70-90 (GTPTMGGTLILFAIVFATLLW), 97-117 (YVLAVLFVTLSFGLVGWVDDY), 134-154 (YFWQSLAGFTVAYGLYVTAQI), 167-187 (GVALELGVFYIILTYFMVVGF), 199-219 (GLAIMPTVMVGSALGIIAYLV), 236-256 (AGELVVYCAALAGAGLGFLWF), 263-283 (VFMGDVGALALGAALGIIAVI), 288-308 (IVFIIMSGIFVMETVSVILQV), and 338-358 (VIVRFWIITVMLVLFGLATLK).

The protein belongs to the glycosyltransferase 4 family. MraY subfamily. The cofactor is Mg(2+).

It is found in the cell inner membrane. It catalyses the reaction UDP-N-acetyl-alpha-D-muramoyl-L-alanyl-gamma-D-glutamyl-meso-2,6-diaminopimeloyl-D-alanyl-D-alanine + di-trans,octa-cis-undecaprenyl phosphate = di-trans,octa-cis-undecaprenyl diphospho-N-acetyl-alpha-D-muramoyl-L-alanyl-D-glutamyl-meso-2,6-diaminopimeloyl-D-alanyl-D-alanine + UMP. It functions in the pathway cell wall biogenesis; peptidoglycan biosynthesis. Functionally, catalyzes the initial step of the lipid cycle reactions in the biosynthesis of the cell wall peptidoglycan: transfers peptidoglycan precursor phospho-MurNAc-pentapeptide from UDP-MurNAc-pentapeptide onto the lipid carrier undecaprenyl phosphate, yielding undecaprenyl-pyrophosphoryl-MurNAc-pentapeptide, known as lipid I. The chain is Phospho-N-acetylmuramoyl-pentapeptide-transferase from Saccharophagus degradans (strain 2-40 / ATCC 43961 / DSM 17024).